Here is a 236-residue protein sequence, read N- to C-terminus: MTRRYWNINLEEMMEAGVHFGHGTRKWNPRMAPYISAKRKGIHIINLTRTARFLSEACDLVFDAARRGKRFLIVGTKNKVVDLVASAAIRARCHYVNKKWLGGMSTNWSTTETRLHKFRDLRAEQKAGRLNHLPKRDAAMLKRQLSHLETYLGGIKYMTGLPDIVIIVDQQEEYTALRECVTLGIPTICLIDTNCDPDLADISIPANDDAIASIRLVLNKLVSAICEGRSSYIRNH.

The protein belongs to the universal ribosomal protein uS2 family.

Its subcellular location is the plastid. It is found in the chloroplast. The chain is Small ribosomal subunit protein uS2c (rps2) from Platanus occidentalis (Sycamore).